The primary structure comprises 286 residues: Diaminopimelate epimerase (286 aa).

Positions 13 and 66 each coordinate substrate. The Proton donor role is filled by C75. Substrate contacts are provided by residues 76–77 (GN), N165, N198, and 216–217 (ER). The Proton acceptor role is filled by C225. 226 to 227 (GT) lines the substrate pocket.

This sequence belongs to the diaminopimelate epimerase family. As to quaternary structure, homodimer.

The protein resides in the cytoplasm. The catalysed reaction is (2S,6S)-2,6-diaminopimelate = meso-2,6-diaminopimelate. It functions in the pathway amino-acid biosynthesis; L-lysine biosynthesis via DAP pathway; DL-2,6-diaminopimelate from LL-2,6-diaminopimelate: step 1/1. Catalyzes the stereoinversion of LL-2,6-diaminopimelate (L,L-DAP) to meso-diaminopimelate (meso-DAP), a precursor of L-lysine and an essential component of the bacterial peptidoglycan. The sequence is that of Diaminopimelate epimerase from Oceanobacillus iheyensis (strain DSM 14371 / CIP 107618 / JCM 11309 / KCTC 3954 / HTE831).